Consider the following 299-residue polypeptide: Probable lipid kinase YegS (299 aa).

The 132-residue stretch at 2–133 (AEFPASLLIL…IDMAQVNKQT (132 aa)) folds into the DAGKc domain. ATP contacts are provided by residues T40, 66-72 (GDGTINE), and T95. The Mg(2+) site is built by L215, D218, and L220. E271 (proton acceptor) is an active-site residue.

The protein belongs to the diacylglycerol/lipid kinase family. YegS lipid kinase subfamily. Mg(2+) is required as a cofactor. Ca(2+) serves as cofactor.

The protein localises to the cytoplasm. In terms of biological role, probably phosphorylates lipids; the in vivo substrate is unknown. The chain is Probable lipid kinase YegS from Escherichia coli O9:H4 (strain HS).